We begin with the raw amino-acid sequence, 234 residues long: Small ribosomal subunit protein uS3 (234 aa).

Residues valine 39–lysine 107 form the KH type-2 domain.

The protein belongs to the universal ribosomal protein uS3 family. Part of the 30S ribosomal subunit. Forms a tight complex with proteins S10 and S14.

In terms of biological role, binds the lower part of the 30S subunit head. Binds mRNA in the 70S ribosome, positioning it for translation. The sequence is that of Small ribosomal subunit protein uS3 from Haemophilus ducreyi (strain 35000HP / ATCC 700724).